A 421-amino-acid chain; its full sequence is Testin (421 aa).

Positions 92 to 199 (MILTNPVAAK…GDVKLPRDMN (108 aa)) constitute a PET domain. 2 disordered regions span residues 133–164 (EKQPVAGSEGAQYRKKQLAKQLPAHDQDPSKC) and 193–213 (KLPRDMNTQGPNRMYIPGGDR). Positions 155–164 (PAHDQDPSKC) are enriched in basic and acidic residues. LIM zinc-binding domains lie at 234–297 (YSCY…CDSE), 299–359 (PRCA…NHAV), and 362–421 (QGCH…KMMS).

It belongs to the prickle / espinas / testin family. Interacts via LIM domain 1 with ZYX. Interacts (via LIM domain 3) with ENAH and VASP. Interacts with ALKBH4, talin, actin, alpha-actinin, GRIP1 and PXN. Interacts (via LIM domain 2) with ACTL7A (via N-terminus). Heterodimer with ACTL7A; the heterodimer interacts with ENAH to form a heterotrimer.

Its subcellular location is the cytoplasm. It localises to the cell junction. It is found in the focal adhesion. Scaffold protein that may play a role in cell adhesion, cell spreading and in the reorganization of the actin cytoskeleton. Plays a role in the regulation of cell proliferation. May act as a tumor suppressor. In Muntiacus muntjak (Barking deer), this protein is Testin (TES).